The sequence spans 234 residues: Ribosomal RNA small subunit methyltransferase G (234 aa).

S-adenosyl-L-methionine contacts are provided by residues Gly74, Phe79, 125-126, and Arg144; that span reads AE.

The protein belongs to the methyltransferase superfamily. RNA methyltransferase RsmG family.

It localises to the cytoplasm. Functionally, specifically methylates the N7 position of a guanine in 16S rRNA. In Roseiflexus castenholzii (strain DSM 13941 / HLO8), this protein is Ribosomal RNA small subunit methyltransferase G.